We begin with the raw amino-acid sequence, 512 residues long: Norfluorocurarine oxidase (512 aa).

The helical transmembrane segment at Leu3–Phe23 threads the bilayer. Heme is bound at residue Cys453.

It belongs to the cytochrome P450 family. The cofactor is heme.

The protein resides in the membrane. The enzyme catalyses norfluorocurarine + reduced [NADPH--hemoprotein reductase] + O2 = 18-hydroxynorfluorocurarine + oxidized [NADPH--hemoprotein reductase] + H2O + H(+). It functions in the pathway alkaloid biosynthesis. In terms of biological role, monooxygenase involved in the biosynthesis of curare monoterpene indole alkaloids (MIAs), natural products such as diaboline, a pharmacologically active compound used to regulate blood pressure. Curare alkaloids act as animal glycine receptor antagonists. Catalyzes the conversion of norfluorocurarine to 18-OH norfluorocurarine. The sequence is that of Norfluorocurarine oxidase from Strychnos sp.